A 396-amino-acid chain; its full sequence is Elongation factor Tu (396 aa).

One can recognise a tr-type G domain in the interval lysine 10 to glutamine 206. The tract at residues glycine 19 to threonine 26 is G1. Glycine 19–threonine 26 lines the GTP pocket. Threonine 26 is a Mg(2+) binding site. The interval glycine 60 to serine 64 is G2. The segment at aspartate 81–glycine 84 is G3. GTP is bound by residues aspartate 81–histidine 85 and asparagine 136–aspartate 139. The interval asparagine 136–aspartate 139 is G4. The tract at residues serine 174–leucine 176 is G5.

The protein belongs to the TRAFAC class translation factor GTPase superfamily. Classic translation factor GTPase family. EF-Tu/EF-1A subfamily. Monomer.

It localises to the cytoplasm. The enzyme catalyses GTP + H2O = GDP + phosphate + H(+). Its function is as follows. GTP hydrolase that promotes the GTP-dependent binding of aminoacyl-tRNA to the A-site of ribosomes during protein biosynthesis. The chain is Elongation factor Tu from Stigmatella aurantiaca.